A 204-amino-acid polypeptide reads, in one-letter code: Transcription initiation factor TFIID subunit 11b (204 aa).

The disordered stretch occupies residues 38 to 60 (PFEAAMEEQEESPVETEQTLEGD). Residues 42 to 58 (AMEEQEESPVETEQTLE) show a composition bias toward acidic residues. The Histone-fold domain occupies 106 to 195 (FTEEQMSRYE…RRLKLQGKVP (90 aa)).

Belongs to the TAF11 family. In terms of assembly, component of the TFIID complex. TFIID is composed of TATA binding protein (TBP) and a number of TBP-associated factors (TAFs) whose MWs range from 14-217 kDa. In terms of tissue distribution, expressed in roots, leaves and inflorescences.

The protein resides in the nucleus. TAFs are components of the transcription factor IID (TFIID) complex that is essential for mediating regulation of RNA polymerase transcription. The sequence is that of Transcription initiation factor TFIID subunit 11b (TAF11B) from Arabidopsis thaliana (Mouse-ear cress).